Reading from the N-terminus, the 403-residue chain is NADH-quinone oxidoreductase subunit D (403 aa).

This sequence belongs to the complex I 49 kDa subunit family. NDH-1 is composed of 14 different subunits. Subunits NuoB, C, D, E, F, and G constitute the peripheral sector of the complex.

It localises to the cell inner membrane. It carries out the reaction a quinone + NADH + 5 H(+)(in) = a quinol + NAD(+) + 4 H(+)(out). In terms of biological role, NDH-1 shuttles electrons from NADH, via FMN and iron-sulfur (Fe-S) centers, to quinones in the respiratory chain. The immediate electron acceptor for the enzyme in this species is believed to be ubiquinone. Couples the redox reaction to proton translocation (for every two electrons transferred, four hydrogen ions are translocated across the cytoplasmic membrane), and thus conserves the redox energy in a proton gradient. In Pelobacter propionicus (strain DSM 2379 / NBRC 103807 / OttBd1), this protein is NADH-quinone oxidoreductase subunit D.